A 564-amino-acid chain; its full sequence is Adenine deaminase (564 aa).

It belongs to the metallo-dependent hydrolases superfamily. Adenine deaminase family. It depends on Mn(2+) as a cofactor.

It carries out the reaction adenine + H2O + H(+) = hypoxanthine + NH4(+). The polypeptide is Adenine deaminase (Methylobacterium sp. (strain 4-46)).